We begin with the raw amino-acid sequence, 742 residues long: Alcohol dehydrogenase (quinone), dehydrogenase subunit (742 aa).

The first 35 residues, 1–35 (MTRPASAKRRSLLGILAAGTICAAALPYAAVPARA), serve as a signal peptide directing secretion. Glu-96 provides a ligand contact to pyrroloquinoline quinone. A disulfide bridge links Cys-142 with Cys-143. Pyrroloquinoline quinone is bound at residue Arg-148. Residue Glu-216 participates in Ca(2+) binding. Thr-278 serves as a coordination point for pyrroloquinoline quinone. Residues Asn-298 and Asp-343 each contribute to the Ca(2+) site. Residue Asp-343 is the Proton acceptor of the active site. Pyrroloquinoline quinone-binding residues include Lys-370 and Ile-584. The 80-residue stretch at 636-715 (KVVDNGYFQY…AIRQYLIKRA (80 aa)) folds into the Cytochrome c domain. Heme c contacts are provided by Cys-649, Cys-652, His-653, and Met-692. Basic and acidic residues predominate over residues 722 to 732 (EVDARKNDKNI). The segment at 722–742 (EVDARKNDKNIPENPTLGINP) is disordered.

Belongs to the bacterial PQQ dehydrogenase family. The alcohol dehydrogenase multicomponent enzyme system is composed of a dehydrogenase subunit I (AdhA) and a cytochrome c subunit II (AdhB). Requires pyrroloquinoline quinone as cofactor. The cofactor is Ca(2+). Heme c serves as cofactor.

The protein localises to the cell membrane. It catalyses the reaction ethanol + a ubiquinone = a ubiquinol + acetaldehyde. Dehydrogenase component of the alcohol dehydrogenase multicomponent enzyme system which is involved in the production of acetic acid and in the ethanol oxidase respiratory chain. Quinohemoprotein alcohol dehydrogenase (ADH) catalyzes the oxidation of ethanol to acetaldehyde by transferring electrons to the ubiquinone embedded in the membrane phospholipids. The electrons transfer from ethanol to membranous ubiquinone occurs from pyrroloquinoline quinone (PQQ) to one heme c in subunit I (AdhA), and finally to two heme c in subunit II (AdhB). Besides ubiquinone reduction, ADH also has a ubiquinol (QH2) oxidation reaction which mediates electron transfer from ubiquinol to the non-energy generating bypass oxidase system. The electrons transfer occurs from ubiquinol (QH2) to the additional heme c within subunit II (AdhB). The sequence is that of Alcohol dehydrogenase (quinone), dehydrogenase subunit from Acetobacter aceti.